Reading from the N-terminus, the 184-residue chain is dCTP deaminase (184 aa).

107 to 112 (KSTYAR) lines the dCTP pocket. Glu-133 acts as the Proton donor/acceptor in catalysis. Gln-152, Tyr-166, and Gln-176 together coordinate dCTP.

This sequence belongs to the dCTP deaminase family. In terms of assembly, homotrimer.

The enzyme catalyses dCTP + H2O + H(+) = dUTP + NH4(+). It participates in pyrimidine metabolism; dUMP biosynthesis; dUMP from dCTP (dUTP route): step 1/2. Functionally, catalyzes the deamination of dCTP to dUTP. The protein is dCTP deaminase of Granulibacter bethesdensis (strain ATCC BAA-1260 / CGDNIH1).